Reading from the N-terminus, the 120-residue chain is Large ribosomal subunit protein uL24 (120 aa).

The tract at residues 1-26 (MVRVISSQPRKQRKARYNAPHHMRGS) is disordered. Positions 10-24 (RKQRKARYNAPHHMR) are enriched in basic residues.

It belongs to the universal ribosomal protein uL24 family. Part of the 50S ribosomal subunit.

One of two assembly initiator proteins, it binds directly to the 5'-end of the 23S rRNA, where it nucleates assembly of the 50S subunit. Functionally, located at the polypeptide exit tunnel on the outside of the subunit. This Methanospirillum hungatei JF-1 (strain ATCC 27890 / DSM 864 / NBRC 100397 / JF-1) protein is Large ribosomal subunit protein uL24.